The primary structure comprises 715 residues: Polyribonucleotide nucleotidyltransferase (715 aa).

Mg(2+) is bound by residues aspartate 493 and aspartate 499. The 60-residue stretch at 560 to 619 (PRMITVKINPEKIRDVIGKGGSVIRALTEETGTTIDISDDGVVTIASTSSEGMAEAKKRI) folds into the KH domain. Residues 629–697 (GQVYEGTVLK…EKGRVRLSAK (69 aa)) form the S1 motif domain.

It belongs to the polyribonucleotide nucleotidyltransferase family. It depends on Mg(2+) as a cofactor.

The protein resides in the cytoplasm. The enzyme catalyses RNA(n+1) + phosphate = RNA(n) + a ribonucleoside 5'-diphosphate. Its function is as follows. Involved in mRNA degradation. Catalyzes the phosphorolysis of single-stranded polyribonucleotides processively in the 3'- to 5'-direction. The polypeptide is Polyribonucleotide nucleotidyltransferase (Burkholderia cenocepacia (strain HI2424)).